We begin with the raw amino-acid sequence, 689 residues long: MSKRRKHSWPQPLKGAESRLWYGGDYNPDQWPEEVWDDDIRLMKKAGVNLVSVGIFSWAKIEPEEGKYDFDWLDRAIDKLGKAGIAVDLASATASPPMWLTQAHPEVLWKDERGDTVWPGAREHWRPTSPVFREYALNLCRRMAEHYKGNPYVVAWHVSNEYGCHNRFDYSDDAMRAFQKWCKKRYKTIDAVNEAWGTAFWAQHMNDFSEIIPPRYIGDGNFMNPGKLLDYKRFSSDALKELYIAERDVLESITPGLPLTTNFMVSAGGSMLDYDDWGAEVDFVSNDHYFTPGEAHFDEVAYAASLMDGISRKEPWFQMEHSTSAVNWRPINYRAEPGSVVRDSLAQVAMGADAICYFQWRQSKAGAEKWHSSMVPHAGEDSQIFRDVCELGADLGRLSDEGLMGTKTVKSKVAVVFDYESQWATEYTANPTQQVDHWTEPLDWFRALADNGITADVVPVRSDWDSYEIAVLPCVYLLSEETSRRVREFVANGGKLFVTYYTGLSDENDHIWLGGYPGSIRDVVGVRVEEFAPMGNDMPGALDHLDLDNGTVAHDFADVITSTADTSTVLASYKAERWTGMNEVPAIVANGYGDGRTVYVGCRLGRQGLAKSLPAMLGSMGLSDLAGDGRVLRVERADAAAANHFEFVFNRTHEPVTVDVEGEAIAASLAHVDDGRATIDPTGVVVLRR.

Arg122 and Asn160 together coordinate substrate. The Proton donor role is filled by Glu161. The Nucleophile role is filled by Glu320. Substrate-binding positions include Trp328 and 368–371; that span reads EKWH.

The protein belongs to the glycosyl hydrolase 42 family.

It catalyses the reaction Hydrolysis of terminal non-reducing beta-D-galactose residues in beta-D-galactosides.. This is Beta-galactosidase BbgII from Bifidobacterium bifidum (strain DSM 20082 / JCM 1254 / BCRC 11844 / KCTC 3440 / E319f (Variant a)).